Consider the following 342-residue polypeptide: L-threonine 3-dehydrogenase (342 aa).

Cys-38 provides a ligand contact to Zn(2+). Active-site charge relay system residues include Thr-40 and His-43. Positions 63, 64, 93, 96, 99, and 107 each coordinate Zn(2+). NAD(+) is bound by residues Ile-175, Asp-195, Arg-200, 262-264 (LGL), and 286-287 (IY).

The protein belongs to the zinc-containing alcohol dehydrogenase family. In terms of assembly, homotetramer. Requires Zn(2+) as cofactor.

The protein resides in the cytoplasm. It carries out the reaction L-threonine + NAD(+) = (2S)-2-amino-3-oxobutanoate + NADH + H(+). It functions in the pathway amino-acid degradation; L-threonine degradation via oxydo-reductase pathway; glycine from L-threonine: step 1/2. Catalyzes the NAD(+)-dependent oxidation of L-threonine to 2-amino-3-ketobutyrate. The polypeptide is L-threonine 3-dehydrogenase (Streptomyces coelicolor (strain ATCC BAA-471 / A3(2) / M145)).